A 190-amino-acid chain; its full sequence is Threonylcarbamoyl-AMP synthase (190 aa).

A YrdC-like domain is found at 7 to 190 (SEAVAHAVAV…ALTGELFRQG (184 aa)).

It belongs to the SUA5 family. TsaC subfamily.

Its subcellular location is the cytoplasm. The enzyme catalyses L-threonine + hydrogencarbonate + ATP = L-threonylcarbamoyladenylate + diphosphate + H2O. In terms of biological role, required for the formation of a threonylcarbamoyl group on adenosine at position 37 (t(6)A37) in tRNAs that read codons beginning with adenine. Catalyzes the conversion of L-threonine, HCO(3)(-)/CO(2) and ATP to give threonylcarbamoyl-AMP (TC-AMP) as the acyladenylate intermediate, with the release of diphosphate. This is Threonylcarbamoyl-AMP synthase from Klebsiella pneumoniae subsp. pneumoniae (strain ATCC 700721 / MGH 78578).